A 72-amino-acid chain; its full sequence is Translation initiation factor IF-1 (72 aa).

The S1-like domain maps to 1–72; it reads MAKEEPIEVE…TRGRIIYRTK (72 aa).

Belongs to the IF-1 family. As to quaternary structure, component of the 30S ribosomal translation pre-initiation complex which assembles on the 30S ribosome in the order IF-2 and IF-3, IF-1 and N-formylmethionyl-tRNA(fMet); mRNA recruitment can occur at any time during PIC assembly.

Its subcellular location is the cytoplasm. Functionally, one of the essential components for the initiation of protein synthesis. Stabilizes the binding of IF-2 and IF-3 on the 30S subunit to which N-formylmethionyl-tRNA(fMet) subsequently binds. Helps modulate mRNA selection, yielding the 30S pre-initiation complex (PIC). Upon addition of the 50S ribosomal subunit IF-1, IF-2 and IF-3 are released leaving the mature 70S translation initiation complex. The sequence is that of Translation initiation factor IF-1 from Syntrophus aciditrophicus (strain SB).